A 269-amino-acid polypeptide reads, in one-letter code: Energy-coupling factor transporter ATP-binding protein EcfA1 (269 aa).

Residues 8–242 form the ABC transporter domain; the sequence is IEFKDVSFQY…EEALISVGLD (235 aa). 42–49 is a binding site for ATP; sequence GHNGSGKS.

It belongs to the ABC transporter superfamily. Energy-coupling factor EcfA family. As to quaternary structure, forms a stable energy-coupling factor (ECF) transporter complex composed of 2 membrane-embedded substrate-binding proteins (S component), 2 ATP-binding proteins (A component) and 2 transmembrane proteins (T component).

Its subcellular location is the cell membrane. Its function is as follows. ATP-binding (A) component of a common energy-coupling factor (ECF) ABC-transporter complex. Unlike classic ABC transporters this ECF transporter provides the energy necessary to transport a number of different substrates. The chain is Energy-coupling factor transporter ATP-binding protein EcfA1 from Staphylococcus epidermidis (strain ATCC 35984 / DSM 28319 / BCRC 17069 / CCUG 31568 / BM 3577 / RP62A).